The following is a 167-amino-acid chain: Peroxiredoxin Pen c 3 (167 aa).

The Thioredoxin domain occupies Leu3–Leu167. Cys60 serves as the catalytic Cysteine sulfenic acid (-SOH) intermediate.

The protein belongs to the peroxiredoxin family. Prx5 subfamily. As to quaternary structure, homodimer; disulfide-linked, upon oxidation.

It catalyses the reaction a hydroperoxide + [thioredoxin]-dithiol = an alcohol + [thioredoxin]-disulfide + H2O. In terms of biological role, thiol-specific peroxidase that catalyzes the reduction of hydrogen peroxide and organic hydroperoxides to water and alcohols, respectively. Plays a role in cell protection against oxidative stress by detoxifying peroxides and as sensor of hydrogen peroxide-mediated signaling events. The chain is Peroxiredoxin Pen c 3 from Penicillium citrinum.